Here is a 154-residue protein sequence, read N- to C-terminus: Myoglobin (154 aa).

One can recognise a Globin domain in the interval 2–148 (GLSDGEWQLV…FRNDIAAKYK (147 aa)). Serine 4 carries the phosphoserine modification. Histidine 65 contacts nitrite. Histidine 65 serves as a coordination point for O2. Threonine 68 is subject to Phosphothreonine. Heme b is bound at residue histidine 94.

The protein belongs to the globin family. Monomeric.

The protein resides in the cytoplasm. The protein localises to the sarcoplasm. The enzyme catalyses Fe(III)-heme b-[protein] + nitric oxide + H2O = Fe(II)-heme b-[protein] + nitrite + 2 H(+). It catalyses the reaction H2O2 + AH2 = A + 2 H2O. Monomeric heme protein which primary function is to store oxygen and facilitate its diffusion within muscle tissues. Reversibly binds oxygen through a pentacoordinated heme iron and enables its timely and efficient release as needed during periods of heightened demand. Depending on the oxidative conditions of tissues and cells, and in addition to its ability to bind oxygen, it also has a nitrite reductase activity whereby it regulates the production of bioactive nitric oxide. Under stress conditions, like hypoxia and anoxia, it also protects cells against reactive oxygen species thanks to its pseudoperoxidase activity. The sequence is that of Myoglobin (MB) from Lutra lutra (European river otter).